Reading from the N-terminus, the 79-residue chain is Ornithine decarboxylase (79 aa).

Residues Ser-8, Gly-45, and 75-78 (EPGR) each bind pyridoxal 5'-phosphate.

The protein belongs to the Orn/Lys/Arg decarboxylase class-II family. In terms of assembly, homodimer. Only the dimer is catalytically active, as the active sites are constructed of residues from both monomers. Pyridoxal 5'-phosphate is required as a cofactor.

Its subcellular location is the cytoplasm. It carries out the reaction L-ornithine + H(+) = putrescine + CO2. The protein operates within amine and polyamine biosynthesis; putrescine biosynthesis via L-ornithine pathway; putrescine from L-ornithine: step 1/1. With respect to regulation, inhibited by antizyme (AZ) OAZ1 in response to polyamine levels. AZ inhibits the assembly of the functional homodimer by binding to ODC monomers and targeting them for ubiquitin-independent proteolytic destruction by the 26S proteasome. In terms of biological role, catalyzes the first and rate-limiting step of polyamine biosynthesis that converts ornithine into putrescine, which is the precursor for the polyamines, spermidine and spermine. Polyamines are essential for cell proliferation and are implicated in cellular processes, ranging from DNA replication to apoptosis. The polypeptide is Ornithine decarboxylase (ODC) (Paracoccidioides brasiliensis).